The primary structure comprises 95 residues: Aspartyl/glutamyl-tRNA(Asn/Gln) amidotransferase subunit C (95 aa).

This sequence belongs to the GatC family. Heterotrimer of A, B and C subunits.

The catalysed reaction is L-glutamyl-tRNA(Gln) + L-glutamine + ATP + H2O = L-glutaminyl-tRNA(Gln) + L-glutamate + ADP + phosphate + H(+). It catalyses the reaction L-aspartyl-tRNA(Asn) + L-glutamine + ATP + H2O = L-asparaginyl-tRNA(Asn) + L-glutamate + ADP + phosphate + 2 H(+). Allows the formation of correctly charged Asn-tRNA(Asn) or Gln-tRNA(Gln) through the transamidation of misacylated Asp-tRNA(Asn) or Glu-tRNA(Gln) in organisms which lack either or both of asparaginyl-tRNA or glutaminyl-tRNA synthetases. The reaction takes place in the presence of glutamine and ATP through an activated phospho-Asp-tRNA(Asn) or phospho-Glu-tRNA(Gln). This chain is Aspartyl/glutamyl-tRNA(Asn/Gln) amidotransferase subunit C, found in Desulforapulum autotrophicum (strain ATCC 43914 / DSM 3382 / VKM B-1955 / HRM2) (Desulfobacterium autotrophicum).